We begin with the raw amino-acid sequence, 200 residues long: Large ribosomal subunit protein bL25 (200 aa).

Disordered stretches follow at residues 1–20 (MTIE…ASRR) and 179–200 (PVVA…GEAA).

Belongs to the bacterial ribosomal protein bL25 family. CTC subfamily. In terms of assembly, part of the 50S ribosomal subunit; part of the 5S rRNA/L5/L18/L25 subcomplex. Contacts the 5S rRNA. Binds to the 5S rRNA independently of L5 and L18.

In terms of biological role, this is one of the proteins that binds to the 5S RNA in the ribosome where it forms part of the central protuberance. This chain is Large ribosomal subunit protein bL25, found in Azoarcus sp. (strain BH72).